The following is a 428-amino-acid chain: Nematode resistance protein-like HSPRO1 (428 aa).

In terms of assembly, interacts with SNF4.

Its subcellular location is the cytoplasm. Positive regulator of basal resistance. This is Nematode resistance protein-like HSPRO1 (HSPRO1) from Arabidopsis thaliana (Mouse-ear cress).